A 509-amino-acid polypeptide reads, in one-letter code: Angiopoietin-4 (509 aa).

The signal sequence occupies residues 1–21 (MLCQPAMLLDGLLLLATMAAA). Asn105, Asn135, Asn149, Asn167, Asn256, Asn306, Asn317, and Asn417 each carry an N-linked (GlcNAc...) asparagine glycan. Positions 181-269 (LSTNKLERQM…LQQQQQQLTE (89 aa)) form a coiled coil. One can recognise a Fibrinogen C-terminal domain in the interval 288–508 (KTPKPVFQDC…GTRMMLRPMG (221 aa)). Cys297 and Cys326 are joined by a disulfide. The segment at 416 to 436 (VNDSSSSAGRKNSLAPQGTKF) is disordered. Cys450 and Cys463 are joined by a disulfide.

In terms of assembly, homodimer; disulfide-linked. Interacts with TEK/TIE2. In terms of tissue distribution, widely expressed.

It localises to the secreted. Functionally, binds to TEK/TIE2, modulating ANGPT1 signaling. Can induce tyrosine phosphorylation of TEK/TIE2. Promotes endothelial cell survival, migration and angiogenesis. This Mus musculus (Mouse) protein is Angiopoietin-4 (Angpt4).